The sequence spans 348 residues: A-kinase anchor protein 7 isoform gamma (348 aa).

The segment at 1-25 (MERPEAGGINSNECENVSRKKKMSE) is disordered. Residues T129 and 219 to 221 (HLT) contribute to the AMP site. CMP is bound by residues T129 and 219-221 (HLT). The PKA-RII-alpha subunit binding domain stretch occupies residues 294–348 (AELVRLSKRLVENAVLKAVQQYLEETQNKNKPGEGSSVKTEAADQNGNDNENNRK). Residues 295–319 (ELVRLSKRLVENAVLKAVQQYLEET) are RI-alpha-binding. Residues 296–309 (LVRLSKRLVENAVL) are RII-binding. The tract at residues 316–348 (LEETQNKNKPGEGSSVKTEAADQNGNDNENNRK) is disordered. A compositionally biased stretch (polar residues) spans 330-348 (SVKTEAADQNGNDNENNRK).

In terms of assembly, binds cAMP-dependent protein kinase (PKA). Interacts with PRKCA; only the cytoplasmic form is capable of interacting with PRKCA. As to expression, expressed in brain, heart, lung, pancreas and placenta.

The protein localises to the nucleus. It is found in the cytoplasm. Its function is as follows. Probably targets cAMP-dependent protein kinase (PKA) to the cellular membrane or cytoskeletal structures. The membrane-associated form reduces epithelial sodium channel (ENaC) activity, whereas the free cytoplasmic form may negatively regulate ENaC channel feedback inhibition by intracellular sodium. This chain is A-kinase anchor protein 7 isoform gamma (AKAP7), found in Homo sapiens (Human).